The chain runs to 773 residues: Subtilisin-like protease SBT3.4 (773 aa).

Residues 1-23 (MRNFRSSVLVVLSLIIVLNVARA) form the signal peptide. Residues 24–108 (SAKSKVHIVY…VIPDSYYELA (85 aa)) constitute a propeptide, activation peptide. Residues 29–108 (VHIVYLGEKQ…VIPDSYYELA (80 aa)) enclose the Inhibitor I9 domain. The 509-residue stretch at 112–620 (IWDYLGPSAD…GGLVNPEKAA (509 aa)) folds into the Peptidase S8 domain. D142 functions as the Charge relay system in the catalytic mechanism. N-linked (GlcNAc...) asparagine glycosylation is present at N200. H216 (charge relay system) is an active-site residue. N-linked (GlcNAc...) asparagine glycans are attached at residues N231, N408, and N536. Residues 382-474 (SLVYPEDPGN…IDNELGTDIL (93 aa)) enclose the PA domain. Residue S551 is the Charge relay system of the active site. N643 carries an N-linked (GlcNAc...) asparagine glycan.

Belongs to the peptidase S8 family.

It is found in the secreted. The protein is Subtilisin-like protease SBT3.4 of Arabidopsis thaliana (Mouse-ear cress).